A 379-amino-acid chain; its full sequence is Sensor histidine kinase YhcY (379 aa).

The Histidine kinase domain maps to 185–373 (RLAQELHDSV…KLSIRLPLKS (189 aa)). Residue His191 is modified to Phosphohistidine; by autocatalysis.

It catalyses the reaction ATP + protein L-histidine = ADP + protein N-phospho-L-histidine.. Its function is as follows. Member of the two-component regulatory system YhcY/YhcZ. Probably activates YhcZ by phosphorylation. This is Sensor histidine kinase YhcY (yhcY) from Bacillus subtilis (strain 168).